Consider the following 163-residue polypeptide: D-aminoacyl-tRNA deacylase (163 aa).

Residues 141–142 carry the Gly-cisPro motif, important for rejection of L-amino acids motif; it reads GP.

Belongs to the DTD family. Homodimer.

It is found in the cytoplasm. It catalyses the reaction glycyl-tRNA(Ala) + H2O = tRNA(Ala) + glycine + H(+). It carries out the reaction a D-aminoacyl-tRNA + H2O = a tRNA + a D-alpha-amino acid + H(+). In terms of biological role, an aminoacyl-tRNA editing enzyme that deacylates mischarged D-aminoacyl-tRNAs. Also deacylates mischarged glycyl-tRNA(Ala), protecting cells against glycine mischarging by AlaRS. Acts via tRNA-based rather than protein-based catalysis; rejects L-amino acids rather than detecting D-amino acids in the active site. By recycling D-aminoacyl-tRNA to D-amino acids and free tRNA molecules, this enzyme counteracts the toxicity associated with the formation of D-aminoacyl-tRNA entities in vivo and helps enforce protein L-homochirality. This is D-aminoacyl-tRNA deacylase from Neisseria meningitidis serogroup A / serotype 4A (strain DSM 15465 / Z2491).